Here is a 267-residue protein sequence, read N- to C-terminus: Taurine import ATP-binding protein TauB (267 aa).

An ABC transporter domain is found at Phe-6–Glu-238. Gly-43–Thr-50 is an ATP binding site.

Belongs to the ABC transporter superfamily. Taurine importer (TC 3.A.1.17.1) family. As to quaternary structure, the complex is composed of two ATP-binding proteins (TauB), two transmembrane proteins (TauC) and a solute-binding protein (TauA).

It localises to the cell inner membrane. It catalyses the reaction taurine(out) + ATP + H2O = taurine(in) + ADP + phosphate + H(+). Part of the ABC transporter complex TauABC involved in taurine import. Responsible for energy coupling to the transport system. In Sinorhizobium fredii (strain NBRC 101917 / NGR234), this protein is Taurine import ATP-binding protein TauB.